The following is a 141-amino-acid chain: Hemoglobin subunit alpha (141 aa).

The Globin domain occupies 1-141 (VLSAADKTNV…VSTVLTSKYR (141 aa)). A Phosphoserine modification is found at S3. K7 carries the N6-succinyllysine modification. The residue at position 8 (T8) is a Phosphothreonine. Position 11 is an N6-succinyllysine (K11). K16 carries the N6-acetyllysine; alternate modification. Position 16 is an N6-succinyllysine; alternate (K16). A Phosphotyrosine modification is found at Y24. S35 carries the phosphoserine modification. At K40 the chain carries N6-succinyllysine. S49 is subject to Phosphoserine. H58 is an O2 binding site. Residue H87 participates in heme b binding. The residue at position 102 (S102) is a Phosphoserine. T108 is modified (phosphothreonine). S124 and S131 each carry phosphoserine. Phosphothreonine occurs at positions 134 and 137. Phosphoserine is present on S138.

This sequence belongs to the globin family. As to quaternary structure, heterotetramer of two alpha chains and two beta chains. In terms of tissue distribution, red blood cells.

Its function is as follows. Involved in oxygen transport from the lung to the various peripheral tissues. In Tamiasciurus hudsonicus (American red squirrel), this protein is Hemoglobin subunit alpha.